The primary structure comprises 229 residues: Germin-like protein 12-1 (229 aa).

The first 22 residues, 1–22 (MASSNFFLPTALIALVATQAMA), serve as a signal peptide directing secretion. Cysteines 32 and 47 form a disulfide. The Cupin type-1 domain occupies 62 to 217 (ANLDKPMDTT…AFQVDKKAVD (156 aa)). Asparagine 78 is a glycosylation site (N-linked (GlcNAc...) asparagine). Residues histidine 111, histidine 113, glutamate 118, and histidine 162 each contribute to the Mn(2+) site.

This sequence belongs to the germin family. As to quaternary structure, oligomer (believed to be a pentamer but probably hexamer).

It localises to the secreted. The protein resides in the extracellular space. It is found in the apoplast. Its function is as follows. May play a role in plant defense. Probably has no oxalate oxidase activity even if the active site is conserved. In Oryza sativa subsp. japonica (Rice), this protein is Germin-like protein 12-1.